Consider the following 379-residue polypeptide: Fructose-1,6-bisphosphate aldolase/phosphatase (379 aa).

D13 serves as the catalytic Proton acceptor; for FBP phosphatase activity. Positions 13, 20, 51, and 52 each coordinate Mg(2+). H20 lines the beta-D-fructose 1,6-bisphosphate pocket. H20 provides a ligand contact to dihydroxyacetone phosphate. Y89 lines the beta-D-fructose 1,6-bisphosphate pocket. Q93 contacts Mg(2+). 102–103 is a binding site for beta-D-fructose 1,6-bisphosphate; it reads GN. Residue D130 coordinates Mg(2+). K131 is a binding site for beta-D-fructose 1,6-bisphosphate. K131 provides a ligand contact to dihydroxyacetone phosphate. The Proton donor/acceptor; for FBP aldolase activity role is filled by Y227. Mg(2+) is bound by residues K230, D231, and D232. The active-site Schiff-base intermediate with DHAP; for FBP aldolase activity is the K230. Residues 240 to 241, R264, D285, and Y346 each bind beta-D-fructose 1,6-bisphosphate; that span reads QS. R264 and D285 together coordinate dihydroxyacetone phosphate.

This sequence belongs to the FBP aldolase/phosphatase family. Homooctamer; dimer of tetramers. Mg(2+) is required as a cofactor.

It carries out the reaction beta-D-fructose 1,6-bisphosphate + H2O = beta-D-fructose 6-phosphate + phosphate. It catalyses the reaction beta-D-fructose 1,6-bisphosphate = D-glyceraldehyde 3-phosphate + dihydroxyacetone phosphate. It participates in carbohydrate biosynthesis; gluconeogenesis. Its function is as follows. Catalyzes two subsequent steps in gluconeogenesis: the aldol condensation of dihydroxyacetone phosphate (DHAP) and glyceraldehyde-3-phosphate (GA3P) to fructose-1,6-bisphosphate (FBP), and the dephosphorylation of FBP to fructose-6-phosphate (F6P). The protein is Fructose-1,6-bisphosphate aldolase/phosphatase of Moorella thermoacetica (strain ATCC 39073 / JCM 9320).